A 50-amino-acid chain; its full sequence is Apoptotic protease-activating factor 1 (50 aa).

Positions 1–31 (ILKKDNYSYISFYNALIHEGYKDLAALLHSG) constitute a CARD domain. The NB-ARC domain maps to 46-50 (GGITS).

As to quaternary structure, monomer. Oligomerizes to a heptameric ring, known as the apoptosome, upon binding of cytochrome c and dATP. Oligomeric Apaf-1 and pro-caspase-9 bind to each other via their respective NH2-terminal CARD domains and consecutively mature caspase-9 is released from the complex. Interacts with APIP. Interacts (via CARD and NACHT domains) with NAIP/BIRC1 (via NACHT domain). Interacts with CIAO2A.

In terms of biological role, oligomeric Apaf-1 mediates the cytochrome c-dependent autocatalytic activation of pro-caspase 9 (Apaf-3), leading to the activation of caspase-3 and apoptosis. This activation requires ATP. In Canis lupus familiaris (Dog), this protein is Apoptotic protease-activating factor 1 (APAF1).